The following is a 400-amino-acid chain: tRNA-specific adenosine deaminase 1 (400 aa).

An A to I editase domain is found at 76-400 (SIATGVKALP…WIPTRTDDVK (325 aa)). His-101 provides a ligand contact to Zn(2+). Glu-103 acts as the Proton donor in catalysis. Arg-108 contacts 1D-myo-inositol hexakisphosphate. Zn(2+)-binding residues include Cys-157 and Cys-223. 4 residues coordinate 1D-myo-inositol hexakisphosphate: Lys-226, Arg-232, Lys-369, and Arg-375.

Belongs to the ADAT1 family. Requires 1D-myo-inositol hexakisphosphate as cofactor. Zn(2+) is required as a cofactor.

The enzyme catalyses adenosine(37) in tRNA(Ala) + H2O + H(+) = inosine(37) in tRNA(Ala) + NH4(+). Its function is as follows. Deaminates adenosine-37 to inosine in tRNA-Ala. The polypeptide is tRNA-specific adenosine deaminase 1 (TAD1) (Saccharomyces cerevisiae (strain ATCC 204508 / S288c) (Baker's yeast)).